A 184-amino-acid chain; its full sequence is Large ribosomal subunit protein uL5 (184 aa).

Belongs to the universal ribosomal protein uL5 family. In terms of assembly, part of the 50S ribosomal subunit; part of the 5S rRNA/L5/L18/L25 subcomplex. Contacts the 5S rRNA and the P site tRNA. Forms a bridge to the 30S subunit in the 70S ribosome.

This is one of the proteins that bind and probably mediate the attachment of the 5S RNA into the large ribosomal subunit, where it forms part of the central protuberance. In the 70S ribosome it contacts protein S13 of the 30S subunit (bridge B1b), connecting the 2 subunits; this bridge is implicated in subunit movement. Contacts the P site tRNA; the 5S rRNA and some of its associated proteins might help stabilize positioning of ribosome-bound tRNAs. The polypeptide is Large ribosomal subunit protein uL5 (Ureaplasma parvum serovar 3 (strain ATCC 27815 / 27 / NCTC 11736)).